The primary structure comprises 897 residues: MRSKHLVTLFIITFLSFSTVKVWGKDVFAGFVTKKLKTLLDCNFALYYNFKGNGPDAGSFLDFVDEPEQFYWFVEHFLSVKFRVPKHLKDKNIHNFTPCLNRSWVSEFLKEYEEPFVNPVMKFLDKEQRLFFTYNFGDVEPQGKYTYFPVKEFHKYCILPPLIKTNIKDGESGEFLKYQLNKEEYKVFLSSVGSQMTAIKNLYSTVEDEQRKQLLKVIIENESTNDISVQCPTYNIKLHYTKECANSNNILKCIDEFLRKTCEKKTESKHPSADLCEHLQFLFESLKNPYLDNFKKFMTNSDFTLIKPQSVWNVPIFDIYKPKNYLDSVQNLDTECFKKLNSKNLIFLSFHDDIPNNPYYNVELQEIVKLSTYTYSIFDKLYNFFFVFKKSGAPISPVSVKELSHNITDFSFKEDNSEIQCQNVRKSLDLEVDVETMKGIAAEKLCKIIEKFILTKDDASKPEKSDIHRGFRILCILISTHVEAYNIVRQLLNMESMISLTRYTSLYIHKFFKSVTLLKGNFLYKNNKAIRYSRACSKASLHVPSVLYRRNIYIPETFLSLYLGLSNLVSSNPSSPFFEYAIIEFLVTYYNKGSEKFVLYFISIISVLYINEYYYEQLSCFYPKEFELIKSRMIHPNIVDRILKGIDNLMKSTRYDKMRTMYLDFESSDIFSREKVFTALYNFDSFIKTNEQLKKKNLEEISEIPVQLETSNDGIGYRKQDVLYETDKPQTMDEASYEETVDEDAHHVNEKQHSAHFLDAIAEKDILEEKTKDQDLEIELYKYMGPLKEQSKSTSAASTSDEISGSEGPSTESTSTGNQGEDKTTDNTYKEMEELEEAEGTSNLKKGLEFYKSSLKLDQLDKEKPKKKKSKRKKKRDSSSDRILLEESKTFTSENEL.

The signal sequence occupies residues 1–24; sequence MRSKHLVTLFIITFLSFSTVKVWG. 5 cysteine pairs are disulfide-bonded: Cys157/Cys231, Cys244/Cys253, Cys262/Cys276, Cys421/Cys620, and Cys475/Cys536. Residues 597-615 form a helical membrane-spanning segment; it reads FVLYFISIISVLYINEYYY. Disordered regions lie at residues 788-845 and 859-897; these read KEQS…SNLK and QLDK…ENEL. The span at 792-801 shows a compositional bias: polar residues; sequence KSTSAASTSD. Low complexity predominate over residues 802–817; the sequence is EISGSEGPSTESTSTG. Ser804 carries the post-translational modification Phosphoserine; by CDPK1. The segment covering 820 to 832 has biased composition (basic and acidic residues); that stretch reads GEDKTTDNTYKEM. The span at 865–876 shows a compositional bias: basic residues; the sequence is PKKKKSKRKKKR. Residues 877–889 are compositionally biased toward basic and acidic residues; the sequence is DSSSDRILLEESK.

In terms of assembly, component of the RhopH complex. RhopH complex is composed of CLAG3.1/CLAG3.2, RhopH2 and RhopH3 with a 1:1:1 subunit stoichiometry. Interacts with CLAG3.1/CLAG3.2. Interacts with CDPK1; the interaction promotes RhopH3 phosphorylation in merozoites. In terms of processing, proteolytically cleaved near C-terminus.

The protein resides in the host cell membrane. Its subcellular location is the parasitophorous vacuole membrane. It localises to the cytoplasm. The protein localises to the cytoplasmic vesicle. It is found in the secretory vesicle. The protein resides in the rhoptry. In terms of biological role, participates in the formation of new permeability pathways in Plasmodium-infected erythrocytes enabling the uptake of nutrients from the blood plasma. Required for maintaining invasion capacity of merozoites. Required for the trophozoite to schizont developmental transition of the intracellular parasite. The chain is High molecular weight rhoptry protein 3 from Plasmodium falciparum (isolate 3D7).